A 132-amino-acid chain; its full sequence is Small ribosomal subunit protein uS8c (132 aa).

It belongs to the universal ribosomal protein uS8 family. As to quaternary structure, part of the 30S ribosomal subunit.

It localises to the plastid. It is found in the cyanelle. Its function is as follows. One of the primary rRNA binding proteins, it binds directly to 16S rRNA central domain where it helps coordinate assembly of the platform of the 30S subunit. The chain is Small ribosomal subunit protein uS8c (rps8) from Cyanophora paradoxa.